The primary structure comprises 364 residues: Nucleosome assembly protein 1;2 (364 aa).

The stretch at 32 to 86 (VESIKNTLQGLAARHTDVLESLEPKVRKRVEVLREIQSQHDDLEAKFFEERAALE) forms a coiled coil. The Nuclear export signal signature appears at 53-68 (LEPKVRKRVEVLREIQ). The Nuclear localization signal motif lies at 227 to 232 (KKKPKK). 2 disordered regions span residues 250-269 (FNFF…DEDT) and 301-364 (GEAA…CKQQ). Composition is skewed to acidic residues over residues 259-269 (PDDDEEIDEDT) and 304-340 (AQDE…DDED). Residue Cys361 is modified to Cysteine methyl ester. Cys361 is lipidated: S-farnesyl cysteine. The propeptide at 362–364 (KQQ) is removed in mature form.

Belongs to the nucleosome assembly protein (NAP) family. In terms of assembly, binds preferentially histone H1 in vitro. In terms of tissue distribution, highly expressed in tissues exhibiting active cell-division activities, such as root and shoot meristems and young flowers.

Its subcellular location is the nucleus. The protein resides in the cytoplasm. May modulate chromatin structure by regulation of nucleosome assembly/disassembly. The chain is Nucleosome assembly protein 1;2 (NAP1;2) from Oryza sativa subsp. indica (Rice).